The following is a 505-amino-acid chain: Deoxyguanosinetriphosphate triphosphohydrolase (505 aa).

The 208-residue stretch at 66–273 folds into the HD domain; sequence RLTHSMEVQQ…MEAADDISYC (208 aa).

It belongs to the dGTPase family. Type 1 subfamily. In terms of assembly, homotetramer. The cofactor is Mg(2+).

The catalysed reaction is dGTP + H2O = 2'-deoxyguanosine + triphosphate + H(+). In terms of biological role, dGTPase preferentially hydrolyzes dGTP over the other canonical NTPs. This is Deoxyguanosinetriphosphate triphosphohydrolase from Salmonella choleraesuis (strain SC-B67).